We begin with the raw amino-acid sequence, 468 residues long: Glucose transport protein (468 aa).

Topologically, residues 1 to 17 (MNPSSSPSQSTANVKFV) are cytoplasmic. Residues 18 to 38 (LLISGVAALGGFLFGFDTAVI) form a helical membrane-spanning segment. Residues 39-58 (NGAVAALQKHFQTDSLLTGL) are Extracellular-facing. The helical transmembrane segment at 59–78 (SVSLALLGSALGAFGAGPIA) threads the bilayer. At 79–84 (DRHGRI) the chain is on the cytoplasmic side. A helical membrane pass occupies residues 85–105 (KTMILAAVLFTLSSIGSGLPF). At 106–114 (TIWDFIFWR) the chain is on the extracellular side. Residues 115 to 135 (VLGGIGVGAASVIAPAYIAEV) form a helical membrane-spanning segment. Over 136–149 (SPAHLRGRLGSLQQ) the chain is Cytoplasmic. Residues 150-170 (LAIVSGIFIALLSNWFIALMA) traverse the membrane as a helical segment. Over 171 to 186 (GGSAQNPWLFGAAAWR) the chain is Extracellular. A helical membrane pass occupies residues 187 to 207 (WMFWTELIPALLYGVCAFLIP). Topologically, residues 208–265 (ESPRYLVAQGQGEKAAAILWKVEGGDVPSRIEEIQATVSLDHKPRFSDLLSRRGGLLP) are cytoplasmic. A helical membrane pass occupies residues 266-286 (IVWIGMGLSALQQFVGINVIF). The Extracellular portion of the chain corresponds to 287-307 (YYSSVLWRSVGFTEEKSLLIT). The chain crosses the membrane as a helical span at residues 308-328 (VITGFINILTTLVAIAFVDKF). Topologically, residues 329–331 (GRK) are cytoplasmic. A helical transmembrane segment spans residues 332–352 (PLLLMGSIGMTITLGILSVVF). The Extracellular portion of the chain corresponds to 353-366 (GGATVVNGQPTLTG). The helical transmembrane segment at 367-387 (AAGIIALVTANLYVFSFGFSW) threads the bilayer. Residues 388 to 412 (GPIVWVLLGEMFNNKIRAAALSVAA) lie on the Cytoplasmic side of the membrane. The chain crosses the membrane as a helical span at residues 413 to 433 (GVQWIANFIISTTFPPLLDTV). At 434 to 436 (GLG) the chain is on the extracellular side. Residues 437–457 (PAYGLYATSAAISIFFIWFFV) form a helical membrane-spanning segment. Topologically, residues 458–468 (KETKGKTLEQM) are cytoplasmic.

It belongs to the major facilitator superfamily. Sugar transporter (TC 2.A.1.1) family.

The protein localises to the cell membrane. This is Glucose transport protein (gtr) from Synechocystis sp. (strain ATCC 27184 / PCC 6803 / Kazusa).